Consider the following 112-residue polypeptide: UPF0060 membrane protein SAV_4756 (112 aa).

The next 4 membrane-spanning stretches (helical) occupy residues 8 to 28 (ALFVAAALFEIGGAWLVWQGV), 33 to 53 (GWLWIGAGVMALGVYGFVATL), 62 to 82 (ILAAYGGVFVAGSLAWGMVAD), and 91 to 111 (VTGALICLAGMTVIMYAPRGG).

Belongs to the UPF0060 family.

The protein localises to the cell membrane. In Streptomyces avermitilis (strain ATCC 31267 / DSM 46492 / JCM 5070 / NBRC 14893 / NCIMB 12804 / NRRL 8165 / MA-4680), this protein is UPF0060 membrane protein SAV_4756.